We begin with the raw amino-acid sequence, 420 residues long: D-tagatose-1,6-bisphosphate aldolase subunit GatZ (420 aa).

It belongs to the GatZ/KbaZ family. GatZ subfamily. Forms a complex with GatY.

Its pathway is carbohydrate metabolism; D-tagatose 6-phosphate degradation; D-glyceraldehyde 3-phosphate and glycerone phosphate from D-tagatose 6-phosphate: step 2/2. Its function is as follows. Component of the tagatose-1,6-bisphosphate aldolase GatYZ that is required for full activity and stability of the Y subunit. Could have a chaperone-like function for the proper and stable folding of GatY. When expressed alone, GatZ does not show any aldolase activity. Is involved in the catabolism of galactitol. The polypeptide is D-tagatose-1,6-bisphosphate aldolase subunit GatZ (Escherichia coli O6:H1 (strain CFT073 / ATCC 700928 / UPEC)).